Reading from the N-terminus, the 422-residue chain is Tyrosine-protein kinase STYK1 (422 aa).

The chain crosses the membrane as a helical span at residues 26-46; it reads VIIVPTLLVTIFLILLGVILW. A Protein kinase domain is found at 114-384; that stretch reads SEVLEQICSG…ELRLRLEAAI (271 aa). ATP-binding positions include 120–128 and K147; that span reads ICSGSCGPI. Catalysis depends on D251, which acts as the Proton acceptor.

This sequence belongs to the protein kinase superfamily. Tyr protein kinase family. In terms of tissue distribution, widely expressed. Highly expressed in brain, placenta and prostate. Expressed in tumor cells such as hepatoma cells L-02, cervix carcinoma cells HeLa, ovary cancer cells Ho8910 and chronic myelogenous leukemia cells K-562, but not in other tumor cells such as epidermoid carcinoma (A-431). Undetectable in most normal lung tissues, widely expressed in lung cancers.

The protein resides in the membrane. It catalyses the reaction L-tyrosyl-[protein] + ATP = O-phospho-L-tyrosyl-[protein] + ADP + H(+). Its function is as follows. Probable tyrosine protein-kinase, which has strong transforming capabilities on a variety of cell lines. When overexpressed, it can also induce tumor cell invasion as well as metastasis in distant organs. May act by activating both MAP kinase and phosphatidylinositol 3'-kinases (PI3K) pathways. This Homo sapiens (Human) protein is Tyrosine-protein kinase STYK1 (STYK1).